A 193-amino-acid chain; its full sequence is MYQDLIRSELNEAAQTLNNFLADEANILAIQQAAQLLAASFKADGKVLSCGNGGSHCDAMHFAEELTGRYRENRPGYPAIAISDPSHLSCVSNDFGYDYVFSRYVEAVGREGDVLLGISTSGNSGNIIRAIEAARAKGMKVITLTGKDGGKMAGSADVEIRVPHFGYADRIQEIHIKAIHIMIQLIEKEMASV.

An SIS domain is found at 37–193 (LAASFKADGK…QLIEKEMASV (157 aa)). 52-54 (NGG) lines the substrate pocket. Positions 61 and 65 each coordinate Zn(2+). Substrate is bound by residues Glu-65, 93-94 (ND), 119-121 (STS), Ser-124, and Gln-172. Zn(2+)-binding residues include Gln-172 and His-180.

It belongs to the SIS family. GmhA subfamily. As to quaternary structure, homotetramer. Requires Zn(2+) as cofactor.

Its subcellular location is the cytoplasm. The catalysed reaction is 2 D-sedoheptulose 7-phosphate = D-glycero-alpha-D-manno-heptose 7-phosphate + D-glycero-beta-D-manno-heptose 7-phosphate. The protein operates within carbohydrate biosynthesis; D-glycero-D-manno-heptose 7-phosphate biosynthesis; D-glycero-alpha-D-manno-heptose 7-phosphate and D-glycero-beta-D-manno-heptose 7-phosphate from sedoheptulose 7-phosphate: step 1/1. Catalyzes the isomerization of sedoheptulose 7-phosphate in D-glycero-D-manno-heptose 7-phosphate. The polypeptide is Phosphoheptose isomerase (Edwardsiella ictaluri (strain 93-146)).